The following is a 319-amino-acid chain: Histidinol-phosphate aminotransferase 1 (319 aa).

An N6-(pyridoxal phosphate)lysine modification is found at Lys182.

It belongs to the class-II pyridoxal-phosphate-dependent aminotransferase family. Histidinol-phosphate aminotransferase subfamily. The cofactor is pyridoxal 5'-phosphate.

It catalyses the reaction L-histidinol phosphate + 2-oxoglutarate = 3-(imidazol-4-yl)-2-oxopropyl phosphate + L-glutamate. It participates in amino-acid biosynthesis; L-histidine biosynthesis; L-histidine from 5-phospho-alpha-D-ribose 1-diphosphate: step 7/9. This is Histidinol-phosphate aminotransferase 1 (hisC1) from Archaeoglobus fulgidus (strain ATCC 49558 / DSM 4304 / JCM 9628 / NBRC 100126 / VC-16).